The sequence spans 428 residues: Serine--tRNA ligase (428 aa).

An L-serine-binding site is contributed by 236–238 (TAE). 267 to 269 (RSE) serves as a coordination point for ATP. Residue Glu290 coordinates L-serine. ATP is bound at residue 354 to 357 (EISS). Ser388 is an L-serine binding site.

This sequence belongs to the class-II aminoacyl-tRNA synthetase family. Type-1 seryl-tRNA synthetase subfamily. Homodimer. The tRNA molecule binds across the dimer.

The protein localises to the cytoplasm. It carries out the reaction tRNA(Ser) + L-serine + ATP = L-seryl-tRNA(Ser) + AMP + diphosphate + H(+). The catalysed reaction is tRNA(Sec) + L-serine + ATP = L-seryl-tRNA(Sec) + AMP + diphosphate + H(+). Its pathway is aminoacyl-tRNA biosynthesis; selenocysteinyl-tRNA(Sec) biosynthesis; L-seryl-tRNA(Sec) from L-serine and tRNA(Sec): step 1/1. Its function is as follows. Catalyzes the attachment of serine to tRNA(Ser). Is also able to aminoacylate tRNA(Sec) with serine, to form the misacylated tRNA L-seryl-tRNA(Sec), which will be further converted into selenocysteinyl-tRNA(Sec). This chain is Serine--tRNA ligase, found in Psychrobacter sp. (strain PRwf-1).